The following is a 661-amino-acid chain: Fusaric acid cluster transcription factor FUB12 (661 aa).

Positions 17–48 (CVPCRTRKIKCNAAVVGLPCGSCVSRECPDEC) form a DNA-binding region, zn(2)-C6 fungal-type. Disordered stretches follow at residues 57-131 (TVKG…RPPG) and 151-185 (SAAQ…QLDD). Positions 73-98 (PDTNGSILSPRQQQLPTNVSRQTTDS) are enriched in polar residues. A compositionally biased stretch (basic and acidic residues) spans 99-109 (SHSDPVEESIH). Residues 110 to 119 (ASHTGSSLRN) are compositionally biased toward polar residues. Positions 120–129 (DTPHSRDRRP) are enriched in basic and acidic residues.

Its subcellular location is the nucleus. Transcription factor that is involved in the formation of the two Fusaric acid derivatives, dehydrofusaric acid and fusarinolic acid, serving as a detoxification mechanism. The chain is Fusaric acid cluster transcription factor FUB12 from Gibberella fujikuroi (strain CBS 195.34 / IMI 58289 / NRRL A-6831) (Bakanae and foot rot disease fungus).